The primary structure comprises 99 residues: CLAVATA3/ESR (CLE)-related protein 41 (99 aa).

An N-terminal signal peptide occupies residues 1–34; that stretch reads MATSNDQTNTKSSHSRTLLLLFIFLSLLLFSSLT. The tract at residues 60-99 is disordered; sequence ASSTMDLRPKASTRRSRTSRRREFGNDAHEVPSGPNPISN. Basic residues predominate over residues 70–79; it reads ASTRRSRTSR. Residues 80-89 are compositionally biased toward basic and acidic residues; that stretch reads RREFGNDAHE. Hydroxyproline is present on residues Pro91 and Pro94. The O-linked (Ara...) hydroxyproline glycan is linked to Pro94.

Belongs to the CLV3/ESR signal peptide family. As to quaternary structure, CLE41p interacts specifically with the leucine-rich repeat receptor-like protein kinase TDR. The O-glycosylation (arabinosylation) of the hydroxyproline Pro-94 enhances binding affinity of the CLE41p peptide for its receptor. As to expression, mostly expressed in inflorescence and roots, and, to a lower extent, in seedlings, flowers, leaves and siliques. Observed along the vascular strands in cotyledons, leaves and roots, but not in shoot apical meristems (SAM). Restricted to the phloem and the neighboring pericycle cells in the roots and hypocotyls.

The protein resides in the secreted. The protein localises to the extracellular space. In terms of biological role, extracellular signal peptide that regulates cell fate. May act with TDR as a ligand-receptor pair in a signal transduction pathway that represses tracheary element differentiation but promotes the formation of procambial cells adjacent to phloem cells in the veins in an auxin-dependent manner. Regulates the transition of protophloem cells from proliferation to differentiation, thus impinging on postembryonic growth capacity of the root meristem; this signaling pathway requires CRN and CLV2. This chain is CLAVATA3/ESR (CLE)-related protein 41, found in Arabidopsis thaliana (Mouse-ear cress).